Reading from the N-terminus, the 282-residue chain is MKLSCGTSFAFLIMFLFAAQSMHVYAGSFHKDVQIHWGDGRGKVRDRDGKLLSLSLDKSSGSGFQSNQEFLYGKAEVQMKLVPGNSAGTVTTFYLKSPGTTWDEIDFEFLGNLSGHPYTLHTNVYTKGSGDKEQQFHLWFDPTVNFHTYCITWNPQRIIFTVDGIPIREFKNSESIGVPFPTKQPMRLYASLWEAEHWATRGGLEKTDWSKAPFTAFYRNYNVEGCVWANGKSSCPANSSWFTQQLDSNGQTRMKGVQSKYMVYNYCNDKRRFPRGVPVECS.

Positions 1–26 are cleaved as a signal peptide; sequence MKLSCGTSFAFLIMFLFAAQSMHVYA. A GH16 domain is found at 27 to 218; it reads GSFHKDVQIH…WSKAPFTAFY (192 aa). Catalysis depends on glutamate 104, which acts as the Nucleophile. Glutamate 108 (proton donor) is an active-site residue. A xyloglucan-binding site is contributed by glutamate 108. N-linked (GlcNAc...) asparagine glycosylation occurs at asparagine 112. Residues 121 to 123, 131 to 133, 197 to 198, and glycine 202 each bind xyloglucan; these read HTN, DKE, and HW. Cysteine 226 and cysteine 235 are joined by a disulfide. A glycan (N-linked (GlcNAc...) asparagine) is linked at asparagine 238. The cysteines at positions 267 and 281 are disulfide-linked. Arginine 272 lines the xyloglucan pocket.

The protein belongs to the glycosyl hydrolase 16 family. XTH group 2 subfamily. Post-translationally, contains at least one intrachain disulfide bond essential for its enzymatic activity. In terms of tissue distribution, root specific.

Its subcellular location is the secreted. The protein resides in the cell wall. It is found in the extracellular space. It localises to the apoplast. The enzyme catalyses breaks a beta-(1-&gt;4) bond in the backbone of a xyloglucan and transfers the xyloglucanyl segment on to O-4 of the non-reducing terminal glucose residue of an acceptor, which can be a xyloglucan or an oligosaccharide of xyloglucan.. Functionally, catalyzes xyloglucan endohydrolysis (XEH) and/or endotransglycosylation (XET). Cleaves and religates xyloglucan polymers, an essential constituent of the primary cell wall, and thereby participates in cell wall construction of growing tissues. The polypeptide is Probable xyloglucan endotransglucosylase/hydrolase protein 18 (XTH18) (Arabidopsis thaliana (Mouse-ear cress)).